We begin with the raw amino-acid sequence, 545 residues long: Chaperonin GroEL (545 aa).

ATP-binding positions include 30–33 (TLGP), Lys51, 87–91 (DGTTT), Gly415, 479–481 (NAA), and Asp495. A disordered region spans residues 526–545 (KDDAPAPAMPDMGGMGGMGM).

It belongs to the chaperonin (HSP60) family. In terms of assembly, forms a cylinder of 14 subunits composed of two heptameric rings stacked back-to-back. Interacts with the co-chaperonin GroES.

The protein resides in the cytoplasm. It catalyses the reaction ATP + H2O + a folded polypeptide = ADP + phosphate + an unfolded polypeptide.. Its function is as follows. Together with its co-chaperonin GroES, plays an essential role in assisting protein folding. The GroEL-GroES system forms a nano-cage that allows encapsulation of the non-native substrate proteins and provides a physical environment optimized to promote and accelerate protein folding. The polypeptide is Chaperonin GroEL (Paracidovorax citrulli (strain AAC00-1) (Acidovorax citrulli)).